The sequence spans 411 residues: 2,3-bisphosphoglycerate-independent phosphoglycerate mutase (411 aa).

This sequence belongs to the BPG-independent phosphoglycerate mutase family. A-PGAM subfamily.

The catalysed reaction is (2R)-2-phosphoglycerate = (2R)-3-phosphoglycerate. It functions in the pathway carbohydrate degradation; glycolysis; pyruvate from D-glyceraldehyde 3-phosphate: step 3/5. Functionally, catalyzes the interconversion of 2-phosphoglycerate and 3-phosphoglycerate. This is 2,3-bisphosphoglycerate-independent phosphoglycerate mutase from Thermococcus gammatolerans (strain DSM 15229 / JCM 11827 / EJ3).